The primary structure comprises 533 residues: Peptide chain release factor 3 (533 aa).

The tr-type G domain maps to 9–284 (ARRRTFAIIS…ALCQLSPPPL (276 aa)). GTP-binding positions include 18 to 25 (SHPDAGKT), 95 to 99 (DTPGH), and 149 to 152 (NKLD).

It belongs to the TRAFAC class translation factor GTPase superfamily. Classic translation factor GTPase family. PrfC subfamily.

It localises to the cytoplasm. Functionally, increases the formation of ribosomal termination complexes and stimulates activities of RF-1 and RF-2. It binds guanine nucleotides and has strong preference for UGA stop codons. It may interact directly with the ribosome. The stimulation of RF-1 and RF-2 is significantly reduced by GTP and GDP, but not by GMP. This Cupriavidus pinatubonensis (strain JMP 134 / LMG 1197) (Cupriavidus necator (strain JMP 134)) protein is Peptide chain release factor 3.